A 342-amino-acid chain; its full sequence is S-adenosylmethionine:tRNA ribosyltransferase-isomerase (342 aa).

It belongs to the QueA family. In terms of assembly, monomer.

It localises to the cytoplasm. The catalysed reaction is 7-aminomethyl-7-carbaguanosine(34) in tRNA + S-adenosyl-L-methionine = epoxyqueuosine(34) in tRNA + adenine + L-methionine + 2 H(+). Its pathway is tRNA modification; tRNA-queuosine biosynthesis. Transfers and isomerizes the ribose moiety from AdoMet to the 7-aminomethyl group of 7-deazaguanine (preQ1-tRNA) to give epoxyqueuosine (oQ-tRNA). The chain is S-adenosylmethionine:tRNA ribosyltransferase-isomerase from Streptococcus agalactiae serotype III (strain NEM316).